A 455-amino-acid polypeptide reads, in one-letter code: Gastric inhibitory polypeptide receptor (455 aa).

A signal peptide spans Met-1 to Gln-18. Topologically, residues Arg-19–Gln-135 are extracellular. Disulfide bonds link Cys-43/Cys-67, Cys-58/Cys-100, and Cys-81/Cys-115. N-linked (GlcNAc...) asparagine glycans are attached at residues Asn-59, Asn-69, and Asn-74. The chain crosses the membrane as a helical span at residues Val-136–Leu-158. Residues Phe-159–Arg-166 are Cytoplasmic-facing. Residues Asn-167 to Thr-186 form a helical membrane-spanning segment. The Extracellular segment spans residues Arg-187–Arg-214. The helical transmembrane segment at Thr-215–His-239 threads the bilayer. The Cytoplasmic portion of the chain corresponds to His-240–Gly-251. Residues His-252–Arg-275 traverse the membrane as a helical segment. Residues Tyr-276–Lys-290 lie on the Extracellular side of the membrane. The helical transmembrane segment at Ala-291–Gly-316 threads the bilayer. Topologically, residues Ile-317–Arg-338 are cytoplasmic. A helical transmembrane segment spans residues Ser-339–Glu-359. Residues Glu-360–Glu-374 lie on the Extracellular side of the membrane. The helical transmembrane segment at Ile-375–Glu-395 threads the bilayer. Residues Val-396 to Cys-455 are Cytoplasmic-facing.

This sequence belongs to the G-protein coupled receptor 2 family. As to quaternary structure, may form homodimers and heterodimers with GLP1R. In terms of processing, N-glycosylation is required for cell surface expression and lengthens receptor half-life by preventing degradation in the ER. Present in the pancreas as well as the gut, adipose tissue, heart, pituitary, and inner layers of the adrenal cortex, whereas it is not found in kidney, spleen, or liver. It is also expressed in several brain regions, including the cerebral cortex, hippocampus, and olfactory bulb.

It localises to the cell membrane. Its function is as follows. This is a receptor for GIP. The activity of this receptor is mediated by G proteins which activate adenylyl cyclase. This Rattus norvegicus (Rat) protein is Gastric inhibitory polypeptide receptor (Gipr).